The primary structure comprises 283 residues: Bifunctional protein FolD (283 aa).

Residues 164-166 (GSS), Ile189, and Ile230 each bind NADP(+).

It belongs to the tetrahydrofolate dehydrogenase/cyclohydrolase family. In terms of assembly, homodimer.

It catalyses the reaction (6R)-5,10-methylene-5,6,7,8-tetrahydrofolate + NADP(+) = (6R)-5,10-methenyltetrahydrofolate + NADPH. The enzyme catalyses (6R)-5,10-methenyltetrahydrofolate + H2O = (6R)-10-formyltetrahydrofolate + H(+). It participates in one-carbon metabolism; tetrahydrofolate interconversion. Catalyzes the oxidation of 5,10-methylenetetrahydrofolate to 5,10-methenyltetrahydrofolate and then the hydrolysis of 5,10-methenyltetrahydrofolate to 10-formyltetrahydrofolate. The chain is Bifunctional protein FolD from Fusobacterium nucleatum subsp. nucleatum (strain ATCC 25586 / DSM 15643 / BCRC 10681 / CIP 101130 / JCM 8532 / KCTC 2640 / LMG 13131 / VPI 4355).